A 215-amino-acid polypeptide reads, in one-letter code: UPF0502 protein Ping_1905 (215 aa).

Belongs to the UPF0502 family.

The protein is UPF0502 protein Ping_1905 of Psychromonas ingrahamii (strain DSM 17664 / CCUG 51855 / 37).